Here is a 156-residue protein sequence, read N- to C-terminus: Small ribosomal subunit protein uS7 (156 aa).

Belongs to the universal ribosomal protein uS7 family. In terms of assembly, part of the 30S ribosomal subunit. Contacts proteins S9 and S11.

In terms of biological role, one of the primary rRNA binding proteins, it binds directly to 16S rRNA where it nucleates assembly of the head domain of the 30S subunit. Is located at the subunit interface close to the decoding center, probably blocks exit of the E-site tRNA. The protein is Small ribosomal subunit protein uS7 of Salmonella choleraesuis (strain SC-B67).